A 319-amino-acid chain; its full sequence is Beta-ketoacyl-[acyl-carrier-protein] synthase III (319 aa).

Residues Cys-114 and His-246 contribute to the active site. The segment at 247 to 251 is ACP-binding; the sequence is QANIR. The active site involves Asn-276.

It belongs to the thiolase-like superfamily. FabH family. As to quaternary structure, homodimer.

It is found in the cytoplasm. The catalysed reaction is malonyl-[ACP] + acetyl-CoA + H(+) = 3-oxobutanoyl-[ACP] + CO2 + CoA. It participates in lipid metabolism; fatty acid biosynthesis. In terms of biological role, catalyzes the condensation reaction of fatty acid synthesis by the addition to an acyl acceptor of two carbons from malonyl-ACP. Catalyzes the first condensation reaction which initiates fatty acid synthesis and may therefore play a role in governing the total rate of fatty acid production. Possesses both acetoacetyl-ACP synthase and acetyl transacylase activities. Its substrate specificity determines the biosynthesis of branched-chain and/or straight-chain of fatty acids. The sequence is that of Beta-ketoacyl-[acyl-carrier-protein] synthase III from Thiobacillus denitrificans (strain ATCC 25259 / T1).